The chain runs to 53 residues: UPF0391 membrane protein Patl_1732 (53 aa).

2 consecutive transmembrane segments (helical) span residues 4–24 and 28–48; these read WAVI…GGIA and AGIA…SVVM.

The protein belongs to the UPF0391 family.

Its subcellular location is the cell membrane. The sequence is that of UPF0391 membrane protein Patl_1732 from Pseudoalteromonas atlantica (strain T6c / ATCC BAA-1087).